The following is a 526-amino-acid chain: Probable DNA ligase (526 aa).

Position 228 (E228) interacts with ATP. Residue K230 is the N6-AMP-lysine intermediate of the active site. 6 residues coordinate ATP: R235, R250, E279, F319, R391, and K397.

It belongs to the ATP-dependent DNA ligase family. It depends on Mg(2+) as a cofactor.

It catalyses the reaction ATP + (deoxyribonucleotide)n-3'-hydroxyl + 5'-phospho-(deoxyribonucleotide)m = (deoxyribonucleotide)n+m + AMP + diphosphate.. DNA ligase that seals nicks in double-stranded DNA during DNA replication, DNA recombination and DNA repair. The chain is Probable DNA ligase from Mycobacterium avium (strain 104).